We begin with the raw amino-acid sequence, 760 residues long: ATP-dependent DNA helicase Hel308 (760 aa).

ATP-binding positions include Q28 and 46–53 (IPTASGKT). A Helicase ATP-binding domain is found at 33-199 (EMGLLEKKNL…WLGAALVLSE (167 aa)). The short motif at 144 to 147 (DEIH) is the DEAH box element. Residues 232–426 (AVNLVLDTIK…SKLGTENALR (195 aa)) enclose the Helicase C-terminal domain.

It belongs to the helicase family. Hel308 subfamily. In terms of assembly, monomer.

The enzyme catalyses Couples ATP hydrolysis with the unwinding of duplex DNA by translocating in the 3'-5' direction.. The catalysed reaction is ATP + H2O = ADP + phosphate + H(+). Its function is as follows. DNA-dependent ATPase and 3'-5' DNA helicase that may be involved in repair of stalled replication forks. This is ATP-dependent DNA helicase Hel308 from Methanococcoides burtonii (strain DSM 6242 / NBRC 107633 / OCM 468 / ACE-M).